The following is a 376-amino-acid chain: Ribonucleoside-diphosphate reductase subunit beta (376 aa).

Fe cation-binding residues include Asp85, Glu116, and His119. The active site involves Tyr123. Residues Glu205, Glu239, and His242 each coordinate Fe cation.

It belongs to the ribonucleoside diphosphate reductase small chain family. As to quaternary structure, tetramer of two alpha and two beta subunits. Fe cation is required as a cofactor.

It carries out the reaction a 2'-deoxyribonucleoside 5'-diphosphate + [thioredoxin]-disulfide + H2O = a ribonucleoside 5'-diphosphate + [thioredoxin]-dithiol. In terms of biological role, provides the precursors necessary for DNA synthesis. Catalyzes the biosynthesis of deoxyribonucleotides from the corresponding ribonucleotides. This is Ribonucleoside-diphosphate reductase subunit beta (nrdB) from Buchnera aphidicola subsp. Acyrthosiphon pisum (strain APS) (Acyrthosiphon pisum symbiotic bacterium).